Consider the following 87-residue polypeptide: Large ribosomal subunit protein bL27 (87 aa).

Residues 1–21 (MAHKKAGGSSRNGRDSESKRL) are disordered.

This sequence belongs to the bacterial ribosomal protein bL27 family.

The sequence is that of Large ribosomal subunit protein bL27 from Paraburkholderia xenovorans (strain LB400).